The primary structure comprises 148 residues: Endoribonuclease YbeY (148 aa).

Zn(2+)-binding residues include H113, H117, and H123.

The protein belongs to the endoribonuclease YbeY family. Requires Zn(2+) as cofactor.

It is found in the cytoplasm. Functionally, single strand-specific metallo-endoribonuclease involved in late-stage 70S ribosome quality control and in maturation of the 3' terminus of the 16S rRNA. The protein is Endoribonuclease YbeY of Borrelia hermsii (strain HS1 / DAH).